The following is a 287-amino-acid chain: Protein PXR1 (287 aa).

The G-patch domain occupies 25-72 (TSRFGHLQLEKFGWKPGMGLGMSPTSSHKTHIKVSIKDDNLGLGAKIK). The segment covering 143–155 (LKSYSNDKKRSRD) has biased composition (basic and acidic residues). Positions 143-254 (LKSYSNDKKR…TTASNIPSTV (112 aa)) are disordered. A compositionally biased stretch (basic residues) spans 163–190 (SKNKSKKQKKDKKDKKDKKDKKDKKDKK). Over residues 191-200 (DKKDKTEKKE) the composition is skewed to basic and acidic residues. The span at 201–220 (KKEKKEKKEKKEKKDKKDKK) shows a compositional bias: basic residues. A compositionally biased stretch (basic and acidic residues) spans 221–230 (DKKDKIDKKD). Residues 239–251 (NNIEVSTTASNIP) show a composition bias toward polar residues.

This sequence belongs to the PINX1 family.

The protein localises to the nucleus. It is found in the nucleolus. In terms of biological role, involved in rRNA-processing at A0, A1 and A2 sites and negatively regulates telomerase. In Vanderwaltozyma polyspora (strain ATCC 22028 / DSM 70294 / BCRC 21397 / CBS 2163 / NBRC 10782 / NRRL Y-8283 / UCD 57-17) (Kluyveromyces polysporus), this protein is Protein PXR1 (PXR1).